The primary structure comprises 295 residues: Ribosomal RNA small subunit methyltransferase A (295 aa).

The S-adenosyl-L-methionine site is built by N33, V35, G60, E81, D111, and N129.

It belongs to the class I-like SAM-binding methyltransferase superfamily. rRNA adenine N(6)-methyltransferase family. RsmA subfamily.

Its subcellular location is the cytoplasm. It carries out the reaction adenosine(1518)/adenosine(1519) in 16S rRNA + 4 S-adenosyl-L-methionine = N(6)-dimethyladenosine(1518)/N(6)-dimethyladenosine(1519) in 16S rRNA + 4 S-adenosyl-L-homocysteine + 4 H(+). Its function is as follows. Specifically dimethylates two adjacent adenosines (A1518 and A1519) in the loop of a conserved hairpin near the 3'-end of 16S rRNA in the 30S particle. May play a critical role in biogenesis of 30S subunits. This Streptomyces avermitilis (strain ATCC 31267 / DSM 46492 / JCM 5070 / NBRC 14893 / NCIMB 12804 / NRRL 8165 / MA-4680) protein is Ribosomal RNA small subunit methyltransferase A.